Here is a 44-residue protein sequence, read N- to C-terminus: Defensin-like peptide (44 aa).

Intrachain disulfides connect C7/C32, C18/C40, and C22/C42.

Hemolymph.

It localises to the secreted. Has antibacterial activity against the Gram-positive bacterium S.lutea (MIC=1.9 uM). Lacks antibacterial activity against the Gram-positive bacteria L.monocytogenes and M.luteus, and the Gram-negative bacteria E.coli D31, E.coli ATCC 25922, and S.typhimurium. Has antifungal activity against A.niger (MIC=2.9 uM), C.albicans (MIC=2.9 uM), C.fructus (MIC=2.9 uM), C.wickerhamii (MIC=2.9 uM), P.pastoris (MIC=2.9 uM), P.stiptis (MIC=2.9 uM), P.tannophilus (MIC=2.9 uM), T.harzianum (MIC=2.9 uM), and Z.marxianus (MIC=2.9 uM), but lacks antifungal activity against C.albidus, F.oxysporum, and S.cerevisiae. In Galleria mellonella (Greater wax moth), this protein is Defensin-like peptide.